Consider the following 500-residue polypeptide: Lysine--tRNA ligase (500 aa).

Residues Glu410 and Glu417 each coordinate Mg(2+).

The protein belongs to the class-II aminoacyl-tRNA synthetase family. In terms of assembly, homodimer. The cofactor is Mg(2+).

It localises to the cytoplasm. The enzyme catalyses tRNA(Lys) + L-lysine + ATP = L-lysyl-tRNA(Lys) + AMP + diphosphate. This is Lysine--tRNA ligase from Pseudomonas putida (strain ATCC 47054 / DSM 6125 / CFBP 8728 / NCIMB 11950 / KT2440).